We begin with the raw amino-acid sequence, 149 residues long: Calmodulin (149 aa).

Ala2 carries the N-acetylalanine modification. EF-hand domains follow at residues 8–43, 44–79, 81–116, and 117–149; these read EQIA…LGQN, PTEA…KMKD, DTEE…LGEK, and LTDE…MMAK. The Ca(2+) site is built by Asp21, Asp23, Asp25, Thr27, Glu32, Asp57, Asp59, Asn61, Thr63, Glu68, Asp94, Asp96, Asn98, and Glu105. Lys116 is modified (N6,N6,N6-trimethyllysine). Ca(2+)-binding residues include Asp130, Asp132, Asp134, Gln136, and Glu141.

The protein belongs to the calmodulin family.

In terms of biological role, calmodulin mediates the control of a large number of enzymes, ion channels and other proteins by Ca(2+). Among the enzymes to be stimulated by the calmodulin-Ca(2+) complex are a number of protein kinases and phosphatases. The protein is Calmodulin of Heterocapsa triquetra (Dinoflagellate).